Here is a 200-residue protein sequence, read N- to C-terminus: Probable GTP-binding protein EngB (200 aa).

The EngB-type G domain maps to 24–198 (EGMEVAFAGR…QAQLDEWLGI (175 aa)). Residues 32-39 (GRSNVGKS), 59-63 (GRTQM), 77-80 (DLPG), 144-147 (TKSD), and 177-179 (FSA) each bind GTP. Positions 39 and 61 each coordinate Mg(2+).

The protein belongs to the TRAFAC class TrmE-Era-EngA-EngB-Septin-like GTPase superfamily. EngB GTPase family. Mg(2+) serves as cofactor.

In terms of biological role, necessary for normal cell division and for the maintenance of normal septation. The protein is Probable GTP-binding protein EngB of Nitrosococcus oceani (strain ATCC 19707 / BCRC 17464 / JCM 30415 / NCIMB 11848 / C-107).